We begin with the raw amino-acid sequence, 140 residues long: Pre-mRNA-splicing factor NTC20 (140 aa).

A Phosphoserine modification is found at Ser-139.

As to quaternary structure, belongs to the NTC complex (or PRP19-associated complex), composed of at least CEF1, CLF1, ISY1, NTC20, SNT309, SYF1, SYF2, and PRP19. The NTC complex associates with the spliceosome after the release of the U1 and U4 snRNAs and forms the CWC spliceosome subcomplex (or CEF1-associated complex) reminiscent of a late-stage spliceosome composed also of the U2, U5 and U6 snRNAs and at least BUD13, BRR2, CDC40, CUS1, CWC2, CWC15, CWC21, CWC22, CWC23, CWC24, CWC25, CWC27, ECM2, HSH155, IST3, LEA1, MSL1, PRP8, PRP9, PRP11, PRP21, PRP22, PRP45, PRP46, SLU7, SMB1, SMD1, SMD2, SMD3, SMX2, SMX3, SNU114, SPP2, RSE1 and YJU2. Interacts with CEF1, CLF1, ISY1, PRP46, and SYF1.

It localises to the nucleus. In terms of biological role, involved in pre-mRNA splicing. As a component of the NTC complex, associates to the spliceosome to mediate conformational rearrangement or to stabilize the structure of the spliceosome after U4 snRNA dissociation, which leads to spliceosome maturation. This chain is Pre-mRNA-splicing factor NTC20 (NTC20), found in Saccharomyces cerevisiae (strain ATCC 204508 / S288c) (Baker's yeast).